A 341-amino-acid chain; its full sequence is S-adenosylmethionine:tRNA ribosyltransferase-isomerase (341 aa).

Belongs to the QueA family. As to quaternary structure, monomer.

Its subcellular location is the cytoplasm. The catalysed reaction is 7-aminomethyl-7-carbaguanosine(34) in tRNA + S-adenosyl-L-methionine = epoxyqueuosine(34) in tRNA + adenine + L-methionine + 2 H(+). It functions in the pathway tRNA modification; tRNA-queuosine biosynthesis. In terms of biological role, transfers and isomerizes the ribose moiety from AdoMet to the 7-aminomethyl group of 7-deazaguanine (preQ1-tRNA) to give epoxyqueuosine (oQ-tRNA). This chain is S-adenosylmethionine:tRNA ribosyltransferase-isomerase, found in Pelodictyon phaeoclathratiforme (strain DSM 5477 / BU-1).